A 189-amino-acid polypeptide reads, in one-letter code: Large ribosomal subunit protein uL6 (189 aa).

This sequence belongs to the universal ribosomal protein uL6 family. Part of the 50S ribosomal subunit.

This protein binds to the 23S rRNA, and is important in its secondary structure. It is located near the subunit interface in the base of the L7/L12 stalk, and near the tRNA binding site of the peptidyltransferase center. The polypeptide is Large ribosomal subunit protein uL6 (Microcystis aeruginosa (strain NIES-843 / IAM M-2473)).